Reading from the N-terminus, the 331-residue chain is Lipoate-protein ligase LplJ (331 aa).

The BPL/LPL catalytic domain occupies D27 to N214. ATP contacts are provided by residues R69, G74–Y77, and K131. K131 is a (R)-lipoate binding site.

Belongs to the LplA family.

It is found in the cytoplasm. The catalysed reaction is L-lysyl-[lipoyl-carrier protein] + (R)-lipoate + ATP = N(6)-[(R)-lipoyl]-L-lysyl-[lipoyl-carrier protein] + AMP + diphosphate + H(+). It functions in the pathway protein modification; protein lipoylation via exogenous pathway; protein N(6)-(lipoyl)lysine from lipoate: step 1/2. It participates in protein modification; protein lipoylation via exogenous pathway; protein N(6)-(lipoyl)lysine from lipoate: step 2/2. Catalyzes both the ATP-dependent activation of exogenously supplied lipoate to lipoyl-AMP and the transfer of the activated lipoyl onto the lipoyl domains of lipoate-dependent enzymes. Is also able to use octanoate as substrate. In Bacillus subtilis (strain 168), this protein is Lipoate-protein ligase LplJ (lplJ).